A 238-amino-acid polypeptide reads, in one-letter code: Sugar fermentation stimulation protein homolog (238 aa).

Belongs to the SfsA family.

This chain is Sugar fermentation stimulation protein homolog, found in Vibrio parahaemolyticus serotype O3:K6 (strain RIMD 2210633).